The sequence spans 573 residues: Glutathione hydrolase 5 proenzyme (573 aa).

Topologically, residues 1–8 (MAWGHRAT) are cytoplasmic. The helical; Signal-anchor for type II membrane protein transmembrane segment at 9 to 29 (VCLVLLGVGLGLVIVVLAAVL) threads the bilayer. The Extracellular segment spans residues 30–573 (SPRQASCGPG…LRKAGKASGY (544 aa)). Asn-98 is a glycosylation site (N-linked (GlcNAc...) asparagine). An L-glutamate-binding site is contributed by Arg-110. Asn-185, Asn-204, Asn-277, Asn-303, Asn-347, and Asn-378 each carry an N-linked (GlcNAc...) asparagine glycan. Catalysis depends on Thr-389, which acts as the Nucleophile. L-glutamate-binding positions include Thr-407, Glu-428, and 454–455 (SS).

This sequence belongs to the gamma-glutamyltransferase family. As to quaternary structure, heterodimer composed of the light and heavy chains. The active site is located in the light chain. Cleaved by autocatalysis into a large and a small subunit. In terms of processing, glycosylated. Very low level of expression. Detected in spleen lymphocytes, medullary and paracortical thymic lymphocytes, lung interstitial cells, bronchial epithelium, proximal tubules in kidney, crypt cells in small intestine, neurons in brain stem and cerebral cortex and in Purkinje cells. As to expression, very low expression.

Its subcellular location is the membrane. The catalysed reaction is glutathione + H2O = L-cysteinylglycine + L-glutamate. It carries out the reaction an S-substituted glutathione + H2O = an S-substituted L-cysteinylglycine + L-glutamate. The enzyme catalyses leukotriene C4 + H2O = leukotriene D4 + L-glutamate. It catalyses the reaction S-[(2E,6E,10E)-geranylgeranyl]-L-glutathione + H2O = S-[(2E,6E,10E)-geranylgeranyl]-L-cysteinylglycine + L-glutamate. The catalysed reaction is an N-terminal (5-L-glutamyl)-[peptide] + an alpha-amino acid = 5-L-glutamyl amino acid + an N-terminal L-alpha-aminoacyl-[peptide]. It participates in lipid metabolism; leukotriene D4 biosynthesis. Its pathway is sulfur metabolism; glutathione metabolism. Its activity is regulated as follows. Inhibited by serine-borate. Cleaves the gamma-glutamyl bond of extracellular glutathione tripeptide (gamma-Glu-Cys-Gly) and certain glutathione conjugates. Hydrolyzes glutathione releasing L-Glu and Cys-Gly dipeptide which is further metabolized to maintain extracellular cysteine levels but also to provide cysteine necessary for intracellular glutathione synthesis. Among glutathione-S-conjugates metabolizes leukotriene C4 (LTC4) and S-geranylgeranyl-glutathione (GGG), but is inactive toward gamma-glutamyl leucine. Converts extracellular LTC4 to LTD4 during acute inflammatory response. Acts as a negative regulator of GGG bioactivity. GGT5 (via GGG catabolism) and ABCC1 (via extracellular transport) establish GGG gradients within lymphoid tissues to position P2RY8-positive lymphocytes at germinal centers in lymphoid follicles and restrict their chemotactic transmigration from blood vessels to bone marrow parenchyma. The transpeptidation reaction, i.e. the transfer of gamma-glutamyl moiety to an acceptor molecule to yield a new gamma-glutamyl compound requires high concentration of dipeptide acceptor and is considered nonphysiological. The sequence is that of Glutathione hydrolase 5 proenzyme (Ggt5) from Mus musculus (Mouse).